Here is a 293-residue protein sequence, read N- to C-terminus: Probable 2-(5''-triphosphoribosyl)-3'-dephosphocoenzyme-A synthase (293 aa).

It belongs to the CitG/MdcB family.

The enzyme catalyses 3'-dephospho-CoA + ATP = 2'-(5''-triphospho-alpha-D-ribosyl)-3'-dephospho-CoA + adenine. Its function is as follows. Involved in the formation of 2-(5''-phosphoribosyl)-3'-dephosphocoenzyme-A, the prosthetic group of the acyl-carrier protein of the malonate decarboxylase. This chain is Probable 2-(5''-triphosphoribosyl)-3'-dephosphocoenzyme-A synthase, found in Pseudomonas paraeruginosa (strain DSM 24068 / PA7) (Pseudomonas aeruginosa (strain PA7)).